The following is a 573-amino-acid chain: Glucocorticoid modulatory element-binding protein 1 (573 aa).

Residue Ala-2 is modified to N-acetylalanine. One can recognise an SAND domain in the interval 82–166; the sequence is TGTIEANEDM…RKMMDSGQID (85 aa). Cys-113 is a Zn(2+) binding site. DNA is bound by residues Lys-139, Lys-143, Lys-146, and Arg-157. 3 residues coordinate Zn(2+): His-170, Cys-174, and Cys-178. Residues 321–367 are a coiled coil; that stretch reads LDNRRNQVEQGEEQFLYTLTDLERQLEEQKKQGQDHRLKSQTVQNVV. Residues 370-398 are disordered; that stretch reads PVSTPKPPKRPRLQRPASTTVLSPSPPVQ.

As to quaternary structure, homodimer, and heterodimer of GMEB1 and GMEB2. GMEB1 and GMEB2 form the parvovirus initiator complex (PIF). Interacts with the glucocorticoid receptor (NR3C1) and NCOA2/TIF2. May interact with HSP27 and CREB-binding protein (CBP).

It localises to the nucleus. Its subcellular location is the cytoplasm. Its function is as follows. Trans-acting factor that binds to glucocorticoid modulatory elements (GME) present in the TAT (tyrosine aminotransferase) promoter and increases sensitivity to low concentrations of glucocorticoids. Also binds to the transferrin receptor promoter. Essential auxiliary factor for the replication of parvoviruses. This Homo sapiens (Human) protein is Glucocorticoid modulatory element-binding protein 1 (GMEB1).